The following is a 101-amino-acid chain: Acylphosphatase (101 aa).

The 89-residue stretch at 13 to 101 (RARILVRGVV…GEFRGFEIRY (89 aa)) folds into the Acylphosphatase-like domain. Active-site residues include arginine 28 and asparagine 46.

This sequence belongs to the acylphosphatase family.

The catalysed reaction is an acyl phosphate + H2O = a carboxylate + phosphate + H(+). The protein is Acylphosphatase (acyP) of Aeropyrum pernix (strain ATCC 700893 / DSM 11879 / JCM 9820 / NBRC 100138 / K1).